The primary structure comprises 306 residues: N-acetylmuramic acid 6-phosphate etherase (306 aa).

One can recognise an SIS domain in the interval 55-218 (AAATLLAGGR…STGAMIKIGK (164 aa)). The active-site Proton donor is the Glu83. Glu114 is a catalytic residue.

The protein belongs to the GCKR-like family. MurNAc-6-P etherase subfamily. In terms of assembly, homodimer.

It carries out the reaction N-acetyl-D-muramate 6-phosphate + H2O = N-acetyl-D-glucosamine 6-phosphate + (R)-lactate. Its pathway is amino-sugar metabolism; 1,6-anhydro-N-acetylmuramate degradation. It functions in the pathway amino-sugar metabolism; N-acetylmuramate degradation. The protein operates within cell wall biogenesis; peptidoglycan recycling. Its function is as follows. Specifically catalyzes the cleavage of the D-lactyl ether substituent of MurNAc 6-phosphate, producing GlcNAc 6-phosphate and D-lactate. Together with AnmK, is also required for the utilization of anhydro-N-acetylmuramic acid (anhMurNAc) either imported from the medium or derived from its own cell wall murein, and thus plays a role in cell wall recycling. The sequence is that of N-acetylmuramic acid 6-phosphate etherase from Erwinia tasmaniensis (strain DSM 17950 / CFBP 7177 / CIP 109463 / NCPPB 4357 / Et1/99).